Reading from the N-terminus, the 285-residue chain is Probable endonuclease 4 (285 aa).

The Zn(2+) site is built by His-69, His-109, Glu-145, Asp-179, His-182, His-216, Asp-229, His-231, and Glu-261.

The protein belongs to the AP endonuclease 2 family. Zn(2+) serves as cofactor.

It catalyses the reaction Endonucleolytic cleavage to 5'-phosphooligonucleotide end-products.. Endonuclease IV plays a role in DNA repair. It cleaves phosphodiester bonds at apurinic or apyrimidinic (AP) sites, generating a 3'-hydroxyl group and a 5'-terminal sugar phosphate. This chain is Probable endonuclease 4, found in Salmonella newport (strain SL254).